The following is a 443-amino-acid chain: Ribosomal protein uS12 methylthiotransferase RimO (443 aa).

The MTTase N-terminal domain maps to 9–119; that stretch reads PKIGMVSLGC…VVSAVHDAAP (111 aa). [4Fe-4S] cluster-binding residues include Cys-18, Cys-54, Cys-83, Cys-150, Cys-154, and Cys-157. Positions 136 to 373 constitute a Radical SAM core domain; the sequence is LTPRHYSYLK…MEKAAQISEA (238 aa). The 68-residue stretch at 376-443 folds into the TRAM domain; the sequence is QAKIGRDIAT…EHDLFGVALS (68 aa).

It belongs to the methylthiotransferase family. RimO subfamily. [4Fe-4S] cluster is required as a cofactor.

It localises to the cytoplasm. It catalyses the reaction L-aspartate(89)-[ribosomal protein uS12]-hydrogen + (sulfur carrier)-SH + AH2 + 2 S-adenosyl-L-methionine = 3-methylsulfanyl-L-aspartate(89)-[ribosomal protein uS12]-hydrogen + (sulfur carrier)-H + 5'-deoxyadenosine + L-methionine + A + S-adenosyl-L-homocysteine + 2 H(+). Functionally, catalyzes the methylthiolation of an aspartic acid residue of ribosomal protein uS12. The chain is Ribosomal protein uS12 methylthiotransferase RimO from Zymomonas mobilis subsp. mobilis (strain ATCC 31821 / ZM4 / CP4).